Reading from the N-terminus, the 2007-residue chain is Structural maintenance of chromosomes flexible hinge domain-containing protein 1 (2007 aa).

N-acetylalanine is present on Ala-2. The ATPase activity domain stretch occupies residues 111 to 702 (TKERIDFLPH…LSVTWPEGDE (592 aa)). Phosphoserine is present on Ser-833. N6-acetyllysine is present on Lys-1350. Lys-1375 is covalently cross-linked (Glycyl lysine isopeptide (Lys-Gly) (interchain with G-Cter in SUMO2)). Thr-1500 carries the phosphothreonine modification. Positions 1721–1848 (GDILGKIAHL…DNLDAANHYR (128 aa)) constitute an SMC hinge domain. An N6-succinyllysine modification is found at Lys-1803. At Ser-1975 the chain carries Phosphoserine. Residues 1984–2007 (PIPTKRMRRESTRQNRRPKGDVPN) form a disordered region.

This sequence belongs to the SMC family. Highly divergent. As to quaternary structure, homodimer; homodimerizes via its SMC hinge domain. Interacts with LRIF1. Post-translationally, sumoylated with SUMO1. As to expression, during embryogenesis, specifically expressed in immature olfactory sensory neurons.

It localises to the chromosome. The enzyme catalyses ATP + H2O = ADP + phosphate + H(+). In terms of biological role, non-canonical member of the structural maintenance of chromosomes (SMC) protein family that plays a key role in epigenetic silencing by regulating chromatin architecture. Promotes heterochromatin formation in both autosomes and chromosome X, probably by mediating the merge of chromatin compartments. Plays a key role in chromosome X inactivation in females by promoting the spreading of heterochromatin. Recruited to inactivated chromosome X by Xist RNA and acts by mediating the merge of chromatin compartments: promotes random chromatin interactions that span the boundaries of existing structures, leading to create a compartment-less architecture typical of inactivated chromosome X. Required to facilitate Xist RNA spreading. Also required for silencing of a subset of clustered autosomal loci in somatic cells, such as the DUX4 locus. Has ATPase activity; may participate in structural manipulation of chromatin in an ATP-dependent manner as part of its role in gene expression regulation. Also plays a role in DNA repair: localizes to sites of DNA double-strand breaks in response to DNA damage to promote the repair of DNA double-strand breaks. Acts by promoting non-homologous end joining (NHEJ) and inhibiting homologous recombination (HR) repair. Required during preimplantation development, probably acts by regulating chromatin architecture. In Mus musculus (Mouse), this protein is Structural maintenance of chromosomes flexible hinge domain-containing protein 1.